The chain runs to 100 residues: Histone-like protein p6 (100 aa).

Residues 1–19 (MRKMMQREVTYTTAQLARM) mediate DNA binding.

This sequence belongs to the phi29likevirus histone-like protein p6 family. Homodimer. Homomultimer. Binds to double-stranded DNA giving rise to multimeric nucleoprotein complexes. Binding specificity for the viral DNA is based on supercoiling, the viral genome having a negative superhelicity lower than that of plasmid DNA. Interacts with the DNA replication protein p17; this interaction optimizes the binding of protein p6 at the viral DNA ends, thus favoring the initiation of replication.

In terms of biological role, histone-like nucleoprotein that binds to the viral dsDNA and responsible for wrapping and compacting the viral DNA about 4-fold. Forms a nucleoprotein complex in which the DNA adopts a right-handed toroidal conformation winding around a protein core. Binds ito most, if not all, the viral genome, although with different affinity, the highest one corresponding to the genome ends. The formation of the nucleoprotein complex at the genome ends, activates the initiation of viral DNA replication. The binding of p6 would recruit the complex formed by the TP and the DNA polymerase to the origin. Protein p6 also represses early transcription from promoter C2, and, together with protein p4, represses transcription from promoters A2b and A2c and activates late transcription from promoter A3. Protein p6 is therefore involved in the early to late transcription switch. The formation of the nucleoprotein complex at the right end of the phage genome where the early promoter C2 is located affects local topology, which may contribute to the promoter repression. The chain is Histone-like protein p6 (6) from Bacillus phage B103 (Bacteriophage B103).